Consider the following 465-residue polypeptide: Cruciform DNA-recognizing protein 1 (465 aa).

Disordered regions lie at residues 107–227 (EAGG…VPNP) and 247–276 (RLNK…ALPQ). The segment covering 127 to 151 (NRKKNKRNNKKRRSKLKKKSTKNNK) has biased composition (basic residues). Ser153 and Ser156 each carry phosphoserine. A compositionally biased stretch (acidic residues) spans 156–165 (SLDDNEEEDG). Residues 160 to 161 (NE) are X-DNA-binding. Positions 166–177 (VTGTTTEDVTGT) are enriched in low complexity. Thr182 carries the post-translational modification Phosphothreonine. Ser271 bears the Phosphoserine mark. At Thr295 the chain carries Phosphothreonine. A disordered region spans residues 300–465 (AVTPLINEPE…FFGKLKKLFK (166 aa)). 2 positions are modified to phosphoserine: Ser319 and Ser343. Residues 337–363 (LVEKRESTEGVLDGSKKVENKAKKDEE) are compositionally biased toward basic and acidic residues. Phosphothreonine is present on Thr366. Basic and acidic residues-rich tracts occupy residues 385-398 (AEGR…EEKE) and 404-428 (EKGS…EVKK). Phosphoserine is present on Ser394. Ser440 carries the post-translational modification Phosphoserine. The span at 451–465 (KKKTGFFGKLKKLFK) shows a compositional bias: basic residues.

It belongs to the CRP1/MDG1 family. In terms of processing, cleaved in the vicinity of position 160 to give an X-DNA-binding N-terminal subpeptide and a non-DNA-binding C-terminal subpeptide.

Its function is as follows. Cruciform DNA-binding protein which exerts an enhancing effect on the cleavage of cruciform DNA (X-DNA) by endonuclease VII from bacteriophage T4. This is Cruciform DNA-recognizing protein 1 (CRP1) from Saccharomyces cerevisiae (strain ATCC 204508 / S288c) (Baker's yeast).